Here is a 276-residue protein sequence, read N- to C-terminus: Phosducin-like protein 1 (276 aa).

Phosphoserine is present on residues S18, S19, S20, and S42. Positions S18–D74 are disordered. In terms of domain architecture, Phosducin spans S62–R272. The segment at F153 to N276 is thioredoxin fold.

This sequence belongs to the phosducin family. As to quaternary structure, forms a complex with the beta and gamma subunits of the GTP-binding proteins. Interacts with the CCT chaperonin complex.

Functionally, functions as a co-chaperone for CCT in the assembly of heterotrimeric G protein complexes, facilitates the assembly of both Gbeta-Ggamma and RGS-Gbeta5 heterodimers. The chain is Phosducin-like protein 1 from Drosophila melanogaster (Fruit fly).